The primary structure comprises 249 residues: tRNA pseudouridine synthase A (249 aa).

Asp-53 serves as the catalytic Nucleophile. Tyr-111 is a binding site for substrate.

It belongs to the tRNA pseudouridine synthase TruA family. In terms of assembly, homodimer.

The enzyme catalyses uridine(38/39/40) in tRNA = pseudouridine(38/39/40) in tRNA. Functionally, formation of pseudouridine at positions 38, 39 and 40 in the anticodon stem and loop of transfer RNAs. The chain is tRNA pseudouridine synthase A from Streptococcus pneumoniae (strain P1031).